A 207-amino-acid chain; its full sequence is Small ribosomal subunit protein uS4 (207 aa).

The disordered stretch occupies residues 26 to 53; it reads KPFDVKTKKHAKAPGQHGQARGKQSEYS. One can recognise an S4 RNA-binding domain in the interval 97 to 159; it reads SRLDNVVYRM…AKQQLRIKNA (63 aa).

Belongs to the universal ribosomal protein uS4 family. In terms of assembly, part of the 30S ribosomal subunit. Contacts protein S5. The interaction surface between S4 and S5 is involved in control of translational fidelity.

One of the primary rRNA binding proteins, it binds directly to 16S rRNA where it nucleates assembly of the body of the 30S subunit. Its function is as follows. With S5 and S12 plays an important role in translational accuracy. The protein is Small ribosomal subunit protein uS4 of Acinetobacter baylyi (strain ATCC 33305 / BD413 / ADP1).